The chain runs to 508 residues: Transposase (508 aa).

In terms of domain architecture, HTH IS21-type spans 3–65; the sequence is LLSVIRRWHF…PFADRLSAWL (63 aa). One can recognise an Integrase catalytic domain in the interval 124-299; the sequence is LAFEPGEAFQ…TIADIWVEEV (176 aa).

The protein belongs to the transposase IS21/IS408/IS1162 family.

Required for the transposition of the insertion element. The chain is Transposase (nmoT) from Aminobacter aminovorans (Chelatobacter heintzii).